The sequence spans 450 residues: ATP-dependent protease ATPase subunit HslU (450 aa).

ATP is bound by residues V27, 69–74, D263, E328, and R400; that span reads GVGKTE.

This sequence belongs to the ClpX chaperone family. HslU subfamily. A double ring-shaped homohexamer of HslV is capped on each side by a ring-shaped HslU homohexamer. The assembly of the HslU/HslV complex is dependent on binding of ATP.

Its subcellular location is the cytoplasm. In terms of biological role, ATPase subunit of a proteasome-like degradation complex; this subunit has chaperone activity. The binding of ATP and its subsequent hydrolysis by HslU are essential for unfolding of protein substrates subsequently hydrolyzed by HslV. HslU recognizes the N-terminal part of its protein substrates and unfolds these before they are guided to HslV for hydrolysis. The protein is ATP-dependent protease ATPase subunit HslU of Aquifex aeolicus (strain VF5).